The chain runs to 160 residues: E3 ubiquitin ligase complex SCF subunit sconC (160 aa).

The interval 101–160 (ILAANYLDIKALLDVGCKTVANMIKGKSPEEIRKTFNIQNDFTPEEEDQIRRENEWAEDR) is interaction with the F-box domain of F-box proteins.

Belongs to the SKP1 family. In terms of assembly, component of the SCF (SKP1-CUL1-F-box protein) E3 ubiquitin ligase complexes.

The protein operates within protein modification; protein ubiquitination. Functionally, essential component of the SCF (SKP1-CUL1-F-box protein) E3 ubiquitin ligase complexes, which mediate the ubiquitination and subsequent proteasomal degradation of target proteins. Controls sulfur metabolite repression, probably by mediating the inactivation or degradation of the metR transcription factor. The polypeptide is E3 ubiquitin ligase complex SCF subunit sconC (sconC) (Talaromyces marneffei (strain ATCC 18224 / CBS 334.59 / QM 7333) (Penicillium marneffei)).